The chain runs to 283 residues: Nucleoid occlusion protein (283 aa).

The H-T-H motif DNA-binding region spans 142–161 (ESLAQRLGKGQSTIANKLRL).

This sequence belongs to the ParB family.

The protein localises to the cytoplasm. It is found in the nucleoid. Effects nucleoid occlusion by binding relatively nonspecifically to DNA and preventing the assembly of the division machinery in the vicinity of the nucleoid, especially under conditions that disturb the cell cycle. It helps to coordinate cell division and chromosome segregation by preventing the formation of the Z ring through the nucleoid, which would cause chromosome breakage. The sequence is that of Nucleoid occlusion protein from Shouchella clausii (strain KSM-K16) (Alkalihalobacillus clausii).